Consider the following 332-residue polypeptide: MNVAINGFGRIGRLVLRASAKNPLINIVAINDPFVSTTYMEYMLEYDTVHGKFDGSLSHDETHIFVNGKPIRVFNEMNPENIKWGEEQVQYVVESTGAFTTLEKASTHLKNGVEKVVISAPSSDAPMFVMGVNHELYEKNMHVVSNASCTTNCLAPLAKVVNDKFGIKEGLMTTVHAVTATQKTVDGPSKKDWRGGRGACFNIIPSSTGAAKAVGKVIPSLNGKLTGMSFRVPTADVSVVDLTARLVNPASYDEIKAAIKSASENEMKGILGYTEKAVVSSDFIGDSHSSIFDAEAGIALTDDFVKLVSWYDNEWGYSSRVLDLIEHMVKNE.

Residues 10–11 (RI), Asp32, and Met77 each bind NAD(+). D-glyceraldehyde 3-phosphate-binding positions include 148 to 150 (SCT), Thr179, 208 to 209 (TG), and Arg231. The active-site Nucleophile is the Cys149. Asn313 contributes to the NAD(+) binding site.

Belongs to the glyceraldehyde-3-phosphate dehydrogenase family. In terms of assembly, homotetramer.

The protein resides in the cytoplasm. The enzyme catalyses D-glyceraldehyde 3-phosphate + phosphate + NAD(+) = (2R)-3-phospho-glyceroyl phosphate + NADH + H(+). Its pathway is carbohydrate degradation; glycolysis; pyruvate from D-glyceraldehyde 3-phosphate: step 1/5. The protein is Glyceraldehyde-3-phosphate dehydrogenase (GPDA) of Phytophthora infestans (Potato late blight agent).